The following is a 961-amino-acid chain: Transcription factor MYB3R-4 (961 aa).

The interval 1-33 is disordered; the sequence is MEAESSTPQERIPKLRHGRTSGPARRSTRGQWT. HTH myb-type domains lie at 24–75, 76–131, and 132–182; these read ARRS…QKVL, NPEL…NPAI, and NKEA…KKKL. 3 DNA-binding regions (H-T-H motif) span residues 52–75, 104–127, and 155–178; these read WKKI…QKVL, WSTI…HNHL, and WAEL…HSSV. Disordered stretches follow at residues 390-457 and 534-555; these read GHSV…LIIS and RPHS…EDMG. Polar residues-rich tracts occupy residues 391-405 and 416-430; these read HSVS…NEFN and SSAS…TKSP. The span at 431–444 shows a compositional bias: low complexity; sequence TQSSSSRFTATAAS. Over residues 534–554 the composition is skewed to basic and acidic residues; the sequence is RPHSLPKHEPNMTNEQHHEDM. Residues 612–619 carry the Nuclear localization signal motif; that stretch reads GKKTLVGA. The tract at residues 756 to 781 is disordered; sequence NTGKPVLSTPGQSVTKAEKAQVSTPR. A compositionally biased stretch (polar residues) spans 764 to 781; it reads TPGQSVTKAEKAQVSTPR.

As to quaternary structure, component of a DREAM-like complex which modulates a variety of developmentally regulated genes and of the mitotic genes in proliferating and differentiated cells. Associates with CDKA-1, RBR1 and E2FB, but not with E2FC, in proliferating cells, at early stages of leaves development. As to expression, expressed in roots, cotyledons and leaves, especially in vascular tissues, and in flowers.

Its subcellular location is the nucleus. Functionally, transcription factor that binds 5'-AACGG-3' motifs in gene promoters. Involved in the regulation of cytokinesis, probably via the activation of several G2/M phase-specific genes transcription (e.g. KNOLLE). Required for the maintenance of diploidy. In terms of biological role, involved in transcription regulation during induced endoreduplication at the powdery mildew (e.g. G.orontii) infection site, thus promoting G.orontii growth and reproduction. This is Transcription factor MYB3R-4 from Arabidopsis thaliana (Mouse-ear cress).